Consider the following 87-residue polypeptide: Acylphosphatase (87 aa).

The 86-residue stretch at Arg2–Tyr87 folds into the Acylphosphatase-like domain. Catalysis depends on residues Arg17 and Asn35.

Belongs to the acylphosphatase family.

It catalyses the reaction an acyl phosphate + H2O = a carboxylate + phosphate + H(+). The chain is Acylphosphatase (acyP) from Deinococcus geothermalis (strain DSM 11300 / CIP 105573 / AG-3a).